Consider the following 236-residue polypeptide: Small ribosomal subunit protein uS2c (236 aa).

This sequence belongs to the universal ribosomal protein uS2 family.

The protein localises to the plastid. It localises to the chloroplast. The polypeptide is Small ribosomal subunit protein uS2c (rps2) (Oenothera biennis (German evening primrose)).